The chain runs to 330 residues: Aspartate--ammonia ligase (330 aa).

The protein belongs to the class-II aminoacyl-tRNA synthetase family. AsnA subfamily. Homodimer.

It localises to the cytoplasm. It catalyses the reaction L-aspartate + NH4(+) + ATP = L-asparagine + AMP + diphosphate + H(+). The protein operates within amino-acid biosynthesis; L-asparagine biosynthesis; L-asparagine from L-aspartate (ammonia route): step 1/1. The chain is Aspartate--ammonia ligase from Salmonella typhimurium (strain LT2 / SGSC1412 / ATCC 700720).